Here is a 379-residue protein sequence, read N- to C-terminus: Cytochrome b (379 aa).

4 helical membrane-spanning segments follow: residues 33–53, 77–98, 113–133, and 178–198; these read FGSL…FLAM, WMIR…FIHI, WNIG…GYVL, and FFAF…VHLL. The heme b site is built by H83 and H97. Heme b contacts are provided by H182 and H196. Residue H201 coordinates a ubiquinone. The next 4 membrane-spanning stretches (helical) occupy residues 226-246, 288-308, 320-340, and 347-367; these read MKDI…VLFY, LGGV…PMMH, LSQC…WIGG, and FIMI…IIMP.

The protein belongs to the cytochrome b family. The cytochrome bc1 complex contains 11 subunits: 3 respiratory subunits (MT-CYB, CYC1 and UQCRFS1), 2 core proteins (UQCRC1 and UQCRC2) and 6 low-molecular weight proteins (UQCRH/QCR6, UQCRB/QCR7, UQCRQ/QCR8, UQCR10/QCR9, UQCR11/QCR10 and a cleavage product of UQCRFS1). This cytochrome bc1 complex then forms a dimer. Heme b serves as cofactor.

The protein resides in the mitochondrion inner membrane. Its function is as follows. Component of the ubiquinol-cytochrome c reductase complex (complex III or cytochrome b-c1 complex) that is part of the mitochondrial respiratory chain. The b-c1 complex mediates electron transfer from ubiquinol to cytochrome c. Contributes to the generation of a proton gradient across the mitochondrial membrane that is then used for ATP synthesis. The chain is Cytochrome b (MT-CYB) from Massoutiera mzabi (Mzab gundi).